The sequence spans 102 residues: MDRQNIRIRLKAFDHRVLDHSTREIVNTAKRTGATVRGPIPLPTLIEKFTVNRSPHVDKKSREQFEIRTHKRVLDIVDPTPQTVDALMKLDLSAGVDVEIKL.

This sequence belongs to the universal ribosomal protein uS10 family. As to quaternary structure, part of the 30S ribosomal subunit.

Functionally, involved in the binding of tRNA to the ribosomes. The protein is Small ribosomal subunit protein uS10 of Caulobacter sp. (strain K31).